The following is a 186-amino-acid chain: Fucolectin-6 (186 aa).

The signal sequence occupies residues 1-32 (MKTCNLTDRMKVKMIMLLFQILAISTLQSVSA). The F5/8 type C-like stretch occupies residues 40-186 (QENVAVRGKA…VEVNAMLPAN (147 aa)). Residues Asn-67, Asp-70, Asn-72, and Ser-81 each contribute to the Ca(2+) site. Disulfide bonds link Cys-82–Cys-175, Cys-114–Cys-115, and Cys-137–Cys-153. The alpha-L-fucose site is built by His-84 and Arg-111. The Cell attachment site motif lies at 111-113 (RGD). Residue Arg-118 coordinates alpha-L-fucose. 2 residues coordinate Ca(2+): Cys-175 and Glu-176.

Belongs to the fucolectin family. As to quaternary structure, homotrimer. As to expression, gill mucous cells.

The protein resides in the secreted. Functionally, acts as a defensive agent. Recognizes blood group fucosylated oligosaccharides including A, B, H and Lewis B-type antigens. Does not recognize Lewis A antigen and has low affinity for monovalent haptens. The polypeptide is Fucolectin-6 (Anguilla japonica (Japanese eel)).